The following is a 547-amino-acid chain: QVQLVQSGAEVRKPGASVRVSCKASGYTFIDSYVGWIRQAPGHGLEWIHWINPNSGGTNYAPRFQGRVTMTRDASFSTAYMDLRSLRSDDSAVFYCAKSDPFWSDYNFDYSSSEEGTEVTYTVSGAWTLPSVFPLTRCCKNIPSNATSVTLGCLATGYFPEPVMVTWDTGSLNGTTLPATTLTLSGHYATISLLTVSGAWAKQMFTCRVAHTPSSTVDNKTFSVCSRDFTPPTVKILQSSCDGLGHFPPTIQLCLVSGYTPGTINITWLEDGQVMDVDLSTASTESQGELASTESQLTLSQKHWLSDRTYTCQVTYQGHTFQDSTKKCADSNPRGVSAYLSRPSPFDLFIRKSPTITCLVVDLAPSKGTVNLTWSRASGKPVNHSTRKEEKQRNGTLTVTSTLPVGTRDWIEGETYQCRVTHPHLPRALMRSTTKTSGPRAAPEVYAFATPEWPGSRDKRTLACLIQNFMPEDISVQWLHNEVQLPDARHSTTQPRKTKGSGFFVFSRLEVTRAEWQEKDEFICRAVHEAASPSQTVQRAVSVNPGK.

Glutamine 1 is subject to Pyrrolidone carboxylic acid. Ig-like domains follow at residues 1 to 120 (QVQL…TEVT), 130 to 223 (PSVF…KTFS), 232 to 329 (PTVK…KKCA), 333 to 437 (PRGV…TKTS), and 443 to 542 (PEVY…RAVS). The tract at residues 1–124 (QVQLVQSGAE…EGTEVTYTVS (124 aa)) is variable (V) domain, involved in antigen recognition. Disulfide bonds link cysteine 22/cysteine 96, cysteine 139/cysteine 225, cysteine 153/cysteine 207, cysteine 254/cysteine 312, cysteine 358/cysteine 418, and cysteine 464/cysteine 524. The segment at 125-547 (GAWTLPSVFP…QRAVSVNPGK (423 aa)) is constant (C) domain. Asparagine 145, asparagine 173, asparagine 219, asparagine 265, asparagine 371, asparagine 383, and asparagine 394 each carry an N-linked (GlcNAc...) asparagine glycan.

As to quaternary structure, immunoglobulins are composed of two identical heavy chains and two identical light chains; disulfide-linked.

Its subcellular location is the secreted. The protein resides in the cell membrane. Immunoglobulins, also known as antibodies, are membrane-bound or secreted glycoproteins produced by B lymphocytes. In the recognition phase of humoral immunity, the membrane-bound immunoglobulins serve as receptors which, upon binding of a specific antigen, trigger the clonal expansion and differentiation of B lymphocytes into immunoglobulins-secreting plasma cells. Secreted immunoglobulins mediate the effector phase of humoral immunity, which results in the elimination of bound antigens. The antigen binding site is formed by the variable domain of one heavy chain, together with that of its associated light chain. Thus, each immunoglobulin has two antigen binding sites with remarkable affinity for a particular antigen. The variable domains are assembled by a process called V-(D)-J rearrangement and can then be subjected to somatic hypermutations which, after exposure to antigen and selection, allow affinity maturation for a particular antigen. The protein is Immunoglobulin epsilon heavy chain of Homo sapiens (Human).